The following is a 248-amino-acid chain: Phosphoribosyl isomerase A (248 aa).

The Proton acceptor role is filled by Asp14. Residue Asp133 is the Proton donor of the active site.

It belongs to the HisA/HisF family.

It is found in the cytoplasm. The enzyme catalyses 1-(5-phospho-beta-D-ribosyl)-5-[(5-phospho-beta-D-ribosylamino)methylideneamino]imidazole-4-carboxamide = 5-[(5-phospho-1-deoxy-D-ribulos-1-ylimino)methylamino]-1-(5-phospho-beta-D-ribosyl)imidazole-4-carboxamide. It catalyses the reaction N-(5-phospho-beta-D-ribosyl)anthranilate = 1-(2-carboxyphenylamino)-1-deoxy-D-ribulose 5-phosphate. It participates in amino-acid biosynthesis; L-histidine biosynthesis; L-histidine from 5-phospho-alpha-D-ribose 1-diphosphate: step 4/9. Its pathway is amino-acid biosynthesis; L-tryptophan biosynthesis; L-tryptophan from chorismate: step 3/5. Involved in both the histidine and tryptophan biosynthetic pathways. This chain is Phosphoribosyl isomerase A, found in Mycobacterium sp. (strain JLS).